A 589-amino-acid polypeptide reads, in one-letter code: Protein NRT1/ PTR FAMILY 7.2 (589 aa).

2 helical membrane-spanning segments follow: residues 32-52 (WLTAILILVNQGLATLAFFGV) and 78-98 (WTGTVYIFSLLGAFLSDSYWG). Phosphothreonine is present on Thr102. Transmembrane regions (helical) follow at residues 105–125 (IFQASFVAGLMMLSLSTGALL), 147–167 (VLFYLSVYLIALGYGGYQPNI), 187–207 (IAFFSYFYLALNLGSLFSNTV), 217–237 (WPLGFWASAGSAFAGLVLFLI), 343–363 (IWLCTILYSVVFTQMASLFVV), 377–397 (IPASSMSSFDILSVAFFIFAY), 423–443 (MGIGLVIAIMAMISAGIVEIH), 464–484 (IFWQVPQYMLIGASEVFMYVG), 504–524 (LCMASISLGNYVSSLLVSIVM), and 548–568 (FYFLLAGLTAADFVVYLICAK).

The protein belongs to the major facilitator superfamily. Proton-dependent oligopeptide transporter (POT/PTR) (TC 2.A.17) family. In terms of tissue distribution, expressed in xylem parenchyma cells within the vasculature. Expressed in siliques and flowers. Higher expression in shoots than in roots.

Its subcellular location is the cell membrane. In terms of biological role, low-affinity nitrate transporter. Involved in nitrate removal from xylem sap. Not involved in oligopeptides transport. This is Protein NRT1/ PTR FAMILY 7.2 (NPF7.2) from Arabidopsis thaliana (Mouse-ear cress).